Reading from the N-terminus, the 147-residue chain is Leghemoglobin 8 (147 aa).

In terms of domain architecture, Globin spans 2 to 147 (GFTEKQESLV…LAASIKKSMS (146 aa)). Y25 and Y30 each carry nitrated tyrosine. Position 45 (S45) interacts with heme b. S45 bears the Phosphoserine mark. H62 is a binding site for O2. Residues K65, H94, and K97 each coordinate heme b. At Y135 the chain carries Nitrated tyrosine.

This sequence belongs to the plant globin family. As to quaternary structure, monomer. Interacts with CAS31 in the cytoplasm; this interaction leads to its protection from denaturation under thermal and drought stresses. In terms of processing, nitrated in effective nodules and particularly in hypoxic conditions; this mechanism may play a protective role in the symbiosis by buffering toxic peroxynitrite NO(2)(-). Nitration level decrease during nodule senescence. Post-translationally, phosphorylation at Ser-45 disrupts the molecular environment of its porphyrin ring oxygen binding pocket, thus leading to a reduced oxygen consumption and to the delivery of oxygen O(2) to symbiosomes. In terms of tissue distribution, root nodules.

Its subcellular location is the cytoplasm. The protein localises to the nucleus. In terms of biological role, leghemoglobin that reversibly binds oxygen O(2) through a pentacoordinated heme iron. In root nodules, facilitates the diffusion of oxygen to the bacteroids while preventing the bacterial nitrogenase from being inactivated by buffering dioxygen, nitric oxide and carbon monoxide, and promoting the formation of reactive oxygen species (ROS, e.g. H(2)O(2)). This role is essential for symbiotic nitrogen fixation (SNF). The protein is Leghemoglobin 8 of Medicago truncatula (Barrel medic).